We begin with the raw amino-acid sequence, 155 residues long: Ribosomal RNA large subunit methyltransferase H (155 aa).

S-adenosyl-L-methionine contacts are provided by residues Leu-72, Gly-103, and 122 to 127 (LSALTL).

The protein belongs to the RNA methyltransferase RlmH family. Homodimer.

The protein localises to the cytoplasm. It catalyses the reaction pseudouridine(1915) in 23S rRNA + S-adenosyl-L-methionine = N(3)-methylpseudouridine(1915) in 23S rRNA + S-adenosyl-L-homocysteine + H(+). Specifically methylates the pseudouridine at position 1915 (m3Psi1915) in 23S rRNA. This is Ribosomal RNA large subunit methyltransferase H from Cronobacter sakazakii (strain ATCC BAA-894) (Enterobacter sakazakii).